The sequence spans 417 residues: Lissencephaly-1 homolog (417 aa).

In terms of domain architecture, LisH spans 7 to 39 (QKEELNRAIADYLFANGYVKALNAFREESQLAG). Residues 54 to 86 (TSVIRLQKKVMDLEAKLNEAEKEFQSMQNAIGF) adopt a coiled-coil conformation. WD repeat units follow at residues 120 to 159 (GHRSPITRVLFHPHYNVFVSASEDASIKVWDYETGEFEHT), 162 to 203 (GHTD…KTLT), 204 to 243 (GHDHNVSSVAFLPSGDFLVSASRDKTIKMWEVSTGYCTKT), 246 to 285 (GHTEWIRSVRPSPEGNLLASCSNDHTIRIWSVESRECQVV), 288 to 340 (GHEH…CLFV), 343 to 382 (GHDNWVRQLVFHPHGRLLLSASDDKTIRVWDLKNRRCHKT), and 385 to 417 (AHSHFVTSLDVNRLAPYAITGSVDQTIHIWDCR).

This sequence belongs to the WD repeat LIS1/nudF family.

The protein localises to the cytoplasm. It localises to the cytoskeleton. The protein resides in the microtubule organizing center. It is found in the centrosome. Positively regulates the activity of the minus-end directed microtubule motor protein dynein. May enhance dynein-mediated microtubule sliding by targeting dynein to the microtubule plus end. Required for several dynein- and microtubule-dependent processes. The sequence is that of Lissencephaly-1 homolog from Schistosoma mansoni (Blood fluke).